The primary structure comprises 588 residues: 2-(3-amino-3-carboxypropyl)histidine synthase subunit 2 (588 aa).

[4Fe-4S] cluster-binding residues include C149, C170, and C402. Disordered regions lie at residues 454–485 and 546–588; these read DERN…VTGQ and GLGS…TKFQ. Residues 466–477 show a composition bias toward acidic residues; sequence DNNEEDSDDEAP. Residues 579 to 588 are compositionally biased toward basic and acidic residues; the sequence is YDYDRETKFQ.

It belongs to the DPH1/DPH2 family. DPH2 subfamily. As to quaternary structure, component of the 2-(3-amino-3-carboxypropyl)histidine synthase complex composed of DPH1, DPH2, DPH3 and a NADH-dependent reductase, predominantly CBR1. It depends on [4Fe-4S] cluster as a cofactor.

It is found in the cytoplasm. It functions in the pathway protein modification; peptidyl-diphthamide biosynthesis. Functionally, required for the first step of diphthamide biosynthesis, a post-translational modification of histidine which occurs in elongation factor 2. DPH1 and DPH2 transfer a 3-amino-3-carboxypropyl (ACP) group from S-adenosyl-L-methionine (SAM) to a histidine residue, the reaction is assisted by a reduction system comprising DPH3 and a NADH-dependent reductase, predominantly CBR1. Facilitates the reduction of the catalytic iron-sulfur cluster found in the DPH1 subunit. This chain is 2-(3-amino-3-carboxypropyl)histidine synthase subunit 2 (DPH2), found in Debaryomyces hansenii (strain ATCC 36239 / CBS 767 / BCRC 21394 / JCM 1990 / NBRC 0083 / IGC 2968) (Yeast).